The sequence spans 438 residues: Vasoactive intestinal polypeptide receptor 2 (438 aa).

A signal peptide spans 1–23; sequence MRTLLPPALLTCWLLAPVNSIHP. Residues 24-124 are Extracellular-facing; it reads ECRFHLEIQE…EDESKITFYI (101 aa). Disulfide bonds link C38/C61, C52/C93, and C75/C109. N-linked (GlcNAc...) asparagine glycans are attached at residues N58, N88, and N92. A helical membrane pass occupies residues 125–150; sequence LVKAIYTLGYSVSLMSLATGSIILCL. The Cytoplasmic portion of the chain corresponds to 151-158; the sequence is FRKLHCTR. The helical transmembrane segment at 159–180 threads the bilayer; that stretch reads NYIHLNLFLSFILRAISVLVKD. Residues 181-203 lie on the Extracellular side of the membrane; sequence DVLYSSSGTLHCPDQPSSWVGCK. C202 and C271 form a disulfide bridge. Residues 204 to 228 form a helical membrane-spanning segment; the sequence is LSLVFLQYCIMANFFWLLVEGLYLH. Topologically, residues 229-239 are cytoplasmic; it reads TLLVAMLPPRR. Residues 240-261 form a helical membrane-spanning segment; it reads CFLAYLLIGWGLPTVCIGAWTA. Residues 262–280 lie on the Extracellular side of the membrane; sequence ARLYLEDTGCWDTNDHSVP. Residues 281 to 304 traverse the membrane as a helical segment; it reads WWVIRIPILISIIVNFVLFISIIR. The Cytoplasmic portion of the chain corresponds to 305-325; it reads ILLQKLTSPDVGGNDQSQYKR. A helical transmembrane segment spans residues 326 to 346; sequence LAKSTLLLIPLFGVHYMVFAV. Over 347 to 354 the chain is Extracellular; sequence FPISISSK. A helical transmembrane segment spans residues 355 to 378; that stretch reads YQILFELCLGSFQGLVVAVLYCFL. Residues 379–438 are Cytoplasmic-facing; the sequence is NSEVQCELKRKWRSRCPTPSASRDYRVCGSSFSRNGSEGALQFHRGSRAQSFLQTETSVI.

It belongs to the G-protein coupled receptor 2 family. Interacts with ADCYAP1/PACAP (via N-terminal extracellular domain); activated by PACAP27 and CAPAC38 neuropeptides. Interacts with VIP; the interaction results in VIPR1 activation. Expressed in CD4+ T-cells, but not in CD8+ T-cells. Expressed in the T-cell lines Jurkat, Peer, MOLT-4, HSB, YT and SUP-T1, but not in the T-cell lines HARRIS and HuT 78.

It is found in the cell membrane. Its function is as follows. G protein-coupled receptor activated by the neuropeptides vasoactive intestinal peptide (VIP) and pituitary adenylate cyclase-activating polypeptide (ADCYAP1/PACAP). Binds VIP and both PACAP27 and PACAP38 bioactive peptides with the following order of potency PACAP38 = VIP &gt; PACAP27. Ligand binding causes a conformation change that triggers signaling via guanine nucleotide-binding proteins (G proteins) and modulates the activity of downstream effectors. Activates cAMP-dependent pathway. May be coupled to phospholipase C. The protein is Vasoactive intestinal polypeptide receptor 2 of Homo sapiens (Human).